The sequence spans 2944 residues: MRLRLLVAALCAAEILMGAPEVWAQPRDRVTCTRLYAADIVFLLDGSSSIGRSNFREVRGFLEGLVLPFSGAASAQGVRFATVQYSDDPQTEFGLDTLGSGSDTIRAIRELSYKGGNTRTGAALHHVSDRVFLPRLTRPGVPKVCILITDGKSQDLVDTAAQKLKGQGVKLFAVGIKNADPEELKRVASQPTSDFFFFVNDFSILRTLLPLISRRVCTTAGGVPVTLPSDDTPSGPRDLVLSEPSSQSLRVQWTAASGPVTGYKVQYTPLTGLGQPLPSERQEVNIPAGETSTRLQGLRPLTDYQVTVVALYANSIGEAVSGTARTTAKEGLELSLQNITSHSLLVAWRRVPGANGYRVTWRDLSGGPTQQQDLSPGQGSVFLDHLEPGTDYEVTVSALFGHSVGPAASLTARTASSVEQTLHPIILSPTSILLSWNLVPEARGYRLEWRRESGLETPQKVELPPDVTRHQLDGLQPGTEYRLTLYTLLEGREVATPATVVPTGLEQLVSPVMNLQAIELPGQRVRVSWNPVPGATEYRFTVRTTQGVERTLLLPGSQTTFDLDDVRAGLSYTVRVSARVGAQEGDASILTIHRDPEAPLVVPGLRVVASDATRIRVAWGLVPGASGFRISWRTGSGPESSRTLTPDSTVTDILGLQPSTSYQVAVSALRGREEGPPVVIVARTDPLGPVRRVHLTQAGSSSVSITWTGVPGATGYRVSWHSGHGPEKSLLVSGDATVAEIDGLEPDTEYIVRVRTHVAGVDGAPASVVVRTAPEPVGSVSKLQILNASSDVLRVTWVGVPGATSYKLAWGRSEGGPMKHRILPGNKESAEIRDLEGGVSYSVRVTALVGDREGAPVSIVITTPPATPALLETLQVVQSGEHSLRLRWEPVPGAPGFRLHWQPEGGQEQSLTLGPESNSYNLVGLEPATKYQVWLTVLGQTGEGPPRKVTAYTEPSHIPSTELRVVDTSIDSVTLTWTPVSGASSYILSWRPLRGTGQEVPRAPQTLPGTSSSHRVTGLEPGISYVFSLTPIQSGVRGSEISVTQTPACSHGPVDVVFLLHATRDNAHNAEAVRRVLERLVSALGPLGPQAAQVGLLTYSHRPSPLFPLNSSHDLGIILRKIRDIPYVDPSGNNLGTAVTTAHRYLLASNAPGRRQQVPGVMVLLVDEPLRGDILSPIREAQTSGLKVMALSLVGADPEQLRRLAPGTDPIQNFFAVDNGPGLDRAVSDLAVALCQAAVTIEPQTGPCAVHCPKGQKGEPGVTGLQGQAGPPGPPGLPGRTGAPGPQGPPGSTQAKGERGFPGPEGPPGSPGLPGVPGSPGIKGSTGRPGPRGEQGERGPQGPKGEPGEPGQITGGGGPGFPGKKGDPGPSGPPGSRGPVGDPGPRGPPGLPGISVKGDKGDRGERGPPGPGIGASEQGDPGLPGLPGSPGPQGPAGRPGEKGEKGDCEDGGPGLPGQPGPPGEPGLRGAPGMTGPKGDRGLTGTPGEPGVKGERGHPGPVGPQGLPGAAGHPGVEGPEGPPGPTGRRGEKGEPGRPGDPAVGPGGAGAKGEKGEAGLPGPRGASGSKGEQGAPGLALPGDPGPKGDPGDRGPIGLTGRAGPTGDSGPPGEKGEPGRPGSPGPVGPRGRDGEAGEKGDEGIPGEPGLPGKAGERGLRGAPGPRGPVGEKGDQGDPGEDGRNGSPGSSGPKGDRGEPGPPGPPGRLVDAGIESRDKGEPGQEGPRGPKGDPGPPGVSGERGIDGLRGPPGPQGDPGVRGPAGDKGDRGPPGLDGRSGLDGKPGAPGPPGLHGASGKAGDPGRDGLPGLRGEHGPPGPPGPPGVPGKAGDDGKPGLNGKNGDPGDPGEDGRKGEKGDSGAPGREGPDGPKGERGAPGNPGLQGPPGLPGQVGPPGQGFPGVPGITGPKGDRGETGSKGEQGLPGERGLRGEPGSLPNAERLLETAGIKVSALREIVDTWDESSGSFLPVPERRPGPKGDPGDRGPPGKEGLIGFPGERGLKGERGDPGPQGPPGLALGERGPPGPPGLAGEPGKPGIPGLPGRAGGSGEAGRPGERGERGEKGERGDQGRDGLPGLPGPPGPPGPKVAIEEPGPGLAREQGPPGLKGAKGEPGSDGDPGPKGDRGVPGIKGDVGEPGKRGHDGNPGLPGERGVAGPEGKPGLQGPRGTPGPVGSHGDPGPPGAPGLAGPAGPQGPSGLKGEPGETGPPGRGLPGPVGAVGLPGPPGPSGLVGPQGSPGLPGQVGETGKPGPPGRDGSSGKDGDRGSPGVPGSPGLPGPVGPKGEPGPVGAPGQVVVGPPGAKGEKGAPGDLAGALLGEPGAKGDRGLPGPRGEKGEAGRAGGPGDPGEDGQKGAPGLKGLKGEPGIGVQGPPGPSGPPGMKGDLGPPGAPGAPGVVGFPGQTGPRGETGQPGPVGERGLAGPPGREGAPGPLGPPGPPGSAGAPGASGLKGDKGDPGAGLPGPRGERGEPGVRGEDGHPGQEGPRGLVGPPGSRGEQGEKGAAGAAGLKGDKGDSAVIEGPPGPRGAKGDMGERGPRGIDGDKGPRGESGNPGDKGSKGEPGDKGSAGSIGVRGLTGPKGEPGAAGIPGEPGAPGKDGIPGFRGDKGDIGFMGPRGLKGEKGIKGTCGRDGERGDKGEAGFPGRPGLAGKKGDMGEPGLPGQSGAPGKEGLIGPKGDRGFDGQSGPKGDQGEKGERGPPGVGGFPGPRGNDGSSGPPGPPGGVGPKGPEGLQGQKGERGPPGESVVGAPGAPGTPGERGEQGRPGPAGPRGEKGEAALTEDDIRDFVRQEMSQHCACQGQFIASGSRPLPGYAADTAGSQLHHVPVLRVSHVEEEGQVPPEDDDDFSEYSVYSVEDYQEPEVPWDGEAEIKGWDQRGSDLCSLPLDEGSCTAYTLRWYHRAVPGGTACHPFVYGGCGGNANRFGTREACERRCPPQGVHSQKTGAA.

Residues 1 to 24 form the signal peptide; that stretch reads MRLRLLVAALCAAEILMGAPEVWA. Residues 18 to 1254 form a nonhelical region (NC1) region; the sequence is GAPEVWAQPR…TGPCAVHCPK (1237 aa). The 174-residue stretch at 39-212 folds into the VWFA 1 domain; sequence DIVFLLDGSS…SILRTLLPLI (174 aa). Fibronectin type-III domains follow at residues 235 to 330, 331 to 417, 418 to 508, 511 to 598, 601 to 688, 689 to 776, 779 to 867, 870 to 957, and 959 to 1053; these read GPRD…TAKE, GLEL…TASS, VEQT…LEQL, PVMN…DPEA, VVPG…DPLG, PVRR…APEP, SVSK…PPAT, LLET…EPSH, and PSTE…SHGP. Residue N338 is glycosylated (N-linked (GlcNAc...) asparagine). The N-linked (GlcNAc...) asparagine glycan is linked to N787. In terms of domain architecture, VWFA 2 spans 1055–1230; the sequence is DVVFLLHATR…PGLDRAVSDL (176 aa). N1110 is a glycosylation site (N-linked (GlcNAc...) asparagine). A Cell attachment site motif is present at residues 1171–1173; it reads RGD. The tract at residues 1255–1475 is interrupted collagenous region; it reads GQKGEPGVTG…GLRGAPGMTG (221 aa). The segment at 1255-2775 is triple-helical region; that stretch reads GQKGEPGVTG…GPRGEKGEAA (1521 aa). 2 disordered regions span residues 1259–1934 and 1960–2773; these read EPGV…GSLP and SSGS…EKGE. Over residues 1338-1352 the composition is skewed to low complexity; that stretch reads RGPQGPKGEPGEPGQ. Positions 1353 to 1363 are enriched in gly residues; sequence ITGGGGPGFPG. 2 stretches are compositionally biased toward basic and acidic residues: residues 1397–1406 and 1439–1448; these read KGDKGDRGER and PGEKGEKGDC. The segment covering 1507 to 1518 has biased composition (low complexity); that stretch reads PGAAGHPGVEGP. 3 stretches are compositionally biased toward basic and acidic residues: residues 1527–1536, 1627–1639, and 1666–1680; these read RRGEKGEPGR, RGRD…KGDE, and VGEK…EDGR. Positions 1813 to 1822 are enriched in pro residues; that stretch reads PPGPPGPPGV. Composition is skewed to basic and acidic residues over residues 1846–1855, 1862–1871, and 1968–1984; these read EDGRKGEKGD, EGPDGPKGER, and PERR…RGPP. The Cell attachment site signature appears at 2002-2004; it reads RGD. The segment covering 2040–2049 has biased composition (gly residues); sequence GRAGGSGEAG. Residues 2050 to 2068 are compositionally biased toward basic and acidic residues; it reads RPGERGERGEKGERGDQGR. The short motif at 2063–2065 is the Cell attachment site element; it reads RGD. Positions 2074-2083 are enriched in pro residues; sequence LPGPPGPPGP. The segment covering 2130–2140 has biased composition (basic and acidic residues); sequence DVGEPGKRGHD. 4 positions are modified to 4-hydroxyproline: P2158, P2167, P2176, and P2179. 4 stretches are compositionally biased toward low complexity: residues 2182–2197, 2226–2241, 2279–2299, and 2306–2317; these read PGLA…SGLK, SGLV…PGQV, PKGE…PPGA, and PGDLAGALLGEP. Over residues 2319–2335 the composition is skewed to basic and acidic residues; that stretch reads AKGDRGLPGPRGEKGEA. Low complexity predominate over residues 2414-2427; sequence ERGLAGPPGREGAP. 2 stretches are compositionally biased toward basic and acidic residues: residues 2462–2477 and 2525–2544; these read RGER…DGHP and AKGD…KGPR. Over residues 2576-2594 the composition is skewed to low complexity; the sequence is PKGEPGAAGIPGEPGAPGK. The Cell attachment site motif lies at 2601–2603; sequence RGD. Over residues 2615–2636 the composition is skewed to basic and acidic residues; sequence LKGEKGIKGTCGRDGERGDKGE. K2616 and K2622 each carry 5-hydroxylysine. A Cell attachment site motif is present at residues 2631–2633; that stretch reads RGD. 3 positions are modified to 4-hydroxyproline: P2655, P2658, and P2664. A compositionally biased stretch (gly residues) spans 2695–2704; sequence GPPGVGGFPG. Positions 2776–2944 are nonhelical region (NC2); it reads LTEDDIRDFV…GVHSQKTGAA (169 aa). Positions 2879 to 2931 constitute a BPTI/Kunitz inhibitor domain; sequence CSLPLDEGSCTAYTLRWYHRAVPGGTACHPFVYGGCGGNANRFGTREACERRC. Disulfide bonds link C2879-C2931, C2888-C2914, and C2906-C2927.

In terms of assembly, homotrimer. Interacts with MIA3/TANGO1; facilitating its loading into transport carriers and subsequent secretion. Prolines at the third position of the tripeptide repeating unit (G-X-Y) are hydroxylated in some or all of the chains.

The protein resides in the secreted. It is found in the extracellular space. It localises to the extracellular matrix. Its subcellular location is the basement membrane. Functionally, stratified squamous epithelial basement membrane protein that forms anchoring fibrils which may contribute to epithelial basement membrane organization and adherence by interacting with extracellular matrix (ECM) proteins such as type IV collagen. The polypeptide is Collagen alpha-1(VII) chain (Mus musculus (Mouse)).